Reading from the N-terminus, the 180-residue chain is ATP synthase subunit delta (180 aa).

The protein belongs to the ATPase delta chain family. As to quaternary structure, F-type ATPases have 2 components, F(1) - the catalytic core - and F(0) - the membrane proton channel. F(1) has five subunits: alpha(3), beta(3), gamma(1), delta(1), epsilon(1). F(0) has three main subunits: a(1), b(2) and c(10-14). The alpha and beta chains form an alternating ring which encloses part of the gamma chain. F(1) is attached to F(0) by a central stalk formed by the gamma and epsilon chains, while a peripheral stalk is formed by the delta and b chains.

The protein localises to the cell membrane. F(1)F(0) ATP synthase produces ATP from ADP in the presence of a proton or sodium gradient. F-type ATPases consist of two structural domains, F(1) containing the extramembraneous catalytic core and F(0) containing the membrane proton channel, linked together by a central stalk and a peripheral stalk. During catalysis, ATP synthesis in the catalytic domain of F(1) is coupled via a rotary mechanism of the central stalk subunits to proton translocation. Its function is as follows. This protein is part of the stalk that links CF(0) to CF(1). It either transmits conformational changes from CF(0) to CF(1) or is implicated in proton conduction. The chain is ATP synthase subunit delta from Enterococcus hirae (strain ATCC 9790 / DSM 20160 / JCM 8729 / LMG 6399 / NBRC 3181 / NCIMB 6459 / NCDO 1258 / NCTC 12367 / WDCM 00089 / R).